Here is a 424-residue protein sequence, read N- to C-terminus: UDP-N-acetylglucosamine 1-carboxyvinyltransferase 3 (424 aa).

A phosphoenolpyruvate-binding site is contributed by 22 to 23; it reads KN. Position 94 (R94) interacts with UDP-N-acetyl-alpha-D-glucosamine. D118 functions as the Proton donor in the catalytic mechanism. UDP-N-acetyl-alpha-D-glucosamine contacts are provided by residues 123–127, D306, and L328; that span reads RPVDQ.

The protein belongs to the EPSP synthase family. MurA subfamily.

It is found in the cytoplasm. It carries out the reaction phosphoenolpyruvate + UDP-N-acetyl-alpha-D-glucosamine = UDP-N-acetyl-3-O-(1-carboxyvinyl)-alpha-D-glucosamine + phosphate. The protein operates within cell wall biogenesis; peptidoglycan biosynthesis. Functionally, cell wall formation. Adds enolpyruvyl to UDP-N-acetylglucosamine. In Symbiobacterium thermophilum (strain DSM 24528 / JCM 14929 / IAM 14863 / T), this protein is UDP-N-acetylglucosamine 1-carboxyvinyltransferase 3.